Reading from the N-terminus, the 286-residue chain is Bifunctional protein FolD 2 (286 aa).

Residues 165–167 (GRG), Thr-192, and Ile-233 contribute to the NADP(+) site.

It belongs to the tetrahydrofolate dehydrogenase/cyclohydrolase family. As to quaternary structure, homodimer.

It carries out the reaction (6R)-5,10-methylene-5,6,7,8-tetrahydrofolate + NADP(+) = (6R)-5,10-methenyltetrahydrofolate + NADPH. The catalysed reaction is (6R)-5,10-methenyltetrahydrofolate + H2O = (6R)-10-formyltetrahydrofolate + H(+). It functions in the pathway one-carbon metabolism; tetrahydrofolate interconversion. Functionally, catalyzes the oxidation of 5,10-methylenetetrahydrofolate to 5,10-methenyltetrahydrofolate and then the hydrolysis of 5,10-methenyltetrahydrofolate to 10-formyltetrahydrofolate. This Salinispora tropica (strain ATCC BAA-916 / DSM 44818 / JCM 13857 / NBRC 105044 / CNB-440) protein is Bifunctional protein FolD 2.